Reading from the N-terminus, the 468-residue chain is ATP synthase subunit beta (468 aa).

Residue 155–162 participates in ATP binding; sequence GGAGVGKT.

It belongs to the ATPase alpha/beta chains family. F-type ATPases have 2 components, CF(1) - the catalytic core - and CF(0) - the membrane proton channel. CF(1) has five subunits: alpha(3), beta(3), gamma(1), delta(1), epsilon(1). CF(0) has three main subunits: a(1), b(2) and c(9-12). The alpha and beta chains form an alternating ring which encloses part of the gamma chain. CF(1) is attached to CF(0) by a central stalk formed by the gamma and epsilon chains, while a peripheral stalk is formed by the delta and b chains.

It is found in the cell membrane. The enzyme catalyses ATP + H2O + 4 H(+)(in) = ADP + phosphate + 5 H(+)(out). In terms of biological role, produces ATP from ADP in the presence of a proton gradient across the membrane. The catalytic sites are hosted primarily by the beta subunits. This Streptococcus agalactiae serotype III (strain NEM316) protein is ATP synthase subunit beta.